Reading from the N-terminus, the 235-residue chain is DUP240 protein DFP4 (235 aa).

The Cytoplasmic segment spans residues 1–44; that stretch reads MSSELLISNSKPRPEGLRKLCEGETVILPRDITPSKCAYFLKQN. The chain crosses the membrane as a helical span at residues 45 to 65; the sequence is IVFISYIFIHIIITIILNRLA. Residues 66 to 72 are Extracellular-facing; that stretch reads LSAHGNT. The helical transmembrane segment at 73–93 threads the bilayer; it reads LIIILAALLITISLFLLLLLP. Topologically, residues 94-235 are cytoplasmic; that stretch reads YLSCSRYKLR…DKYPEMGVTV (142 aa).

Belongs to the DUP/COS family. Interacts according to large scale protein interaction studies with BZZ1, SRB4 and SUA7.

It is found in the cell membrane. In Saccharomyces cerevisiae (strain ATCC 204508 / S288c) (Baker's yeast), this protein is DUP240 protein DFP4.